A 318-amino-acid chain; its full sequence is HPr kinase/phosphorylase (318 aa).

Active-site residues include histidine 141 and lysine 162. 156-163 (GDSAMGKS) provides a ligand contact to ATP. Serine 163 provides a ligand contact to Mg(2+). Aspartate 180 (proton acceptor; for phosphorylation activity. Proton donor; for dephosphorylation activity) is an active-site residue. The tract at residues 204-213 (LEVRGLGILN) is important for the catalytic mechanism of both phosphorylation and dephosphorylation. Position 205 (glutamate 205) interacts with Mg(2+). Arginine 248 is an active-site residue. Residues 269-274 (PVAAGR) are important for the catalytic mechanism of dephosphorylation.

The protein belongs to the HPrK/P family. As to quaternary structure, homohexamer. It depends on Mg(2+) as a cofactor.

It catalyses the reaction [HPr protein]-L-serine + ATP = [HPr protein]-O-phospho-L-serine + ADP + H(+). It carries out the reaction [HPr protein]-O-phospho-L-serine + phosphate + H(+) = [HPr protein]-L-serine + diphosphate. Catalyzes the ATP- as well as the pyrophosphate-dependent phosphorylation of a specific serine residue in HPr, a phosphocarrier protein of the phosphoenolpyruvate-dependent sugar phosphotransferase system (PTS). HprK/P also catalyzes the pyrophosphate-producing, inorganic phosphate-dependent dephosphorylation (phosphorolysis) of seryl-phosphorylated HPr (P-Ser-HPr). The chain is HPr kinase/phosphorylase from Chromobacterium violaceum (strain ATCC 12472 / DSM 30191 / JCM 1249 / CCUG 213 / NBRC 12614 / NCIMB 9131 / NCTC 9757 / MK).